Here is a 151-residue protein sequence, read N- to C-terminus: Multiprotein-bridging factor 1 (151 aa).

The tract at residues 1–32 (MSSDWDSVTIIGQKARVGGGGPRENVAKTSSQ) is disordered. The HTH cro/C1-type domain occupies 86–140 (IQQARQEKKLTQKELATKVNEKPNVINDYEAGRAIPNQQLLAKLERALGVKLRGK). The H-T-H motif DNA-binding region spans 97–116 (QKELATKVNEKPNVINDYEA).

The protein belongs to the MBF1 family.

Its function is as follows. Transcriptional coactivator that stimulates GCN4-dependent transcriptional activity by bridging the DNA-binding region of GCN4 and TBP (SPT15), thereby recruiting TBP to GCN4-bound promoters. Involved in induction of the ribosome quality control (RQC) pathway; a pathway that degrades nascent peptide chains during problematic translation. Required to prevent stalled ribosomes from frameshifting. The sequence is that of Multiprotein-bridging factor 1 (MBF1) from Candida albicans (strain SC5314 / ATCC MYA-2876) (Yeast).